A 1068-amino-acid chain; its full sequence is Probable ATPase FE772_23070 (1068 aa).

217-224 (GGGGAGKT) is a binding site for ATP.

Functionally, involved in defense against bacteriophages. When this probable 4 gene operon (bGSDM-FE772_23060-FE772_23065-FE772_23070) is inserted into E.coli it provides nearly 100-fold protection against phages T5 and T6 and about 8-fold against phage T4. The operon without bGSDM no longer protects against phage. Probably a nucleotide hydrolase, possibly of ATP. This is Probable ATPase FE772_23070 from Lysobacter enzymogenes.